The sequence spans 101 residues: Large ribosomal subunit protein bL21 (101 aa).

This sequence belongs to the bacterial ribosomal protein bL21 family. Part of the 50S ribosomal subunit. Contacts protein L20.

Functionally, this protein binds to 23S rRNA in the presence of protein L20. The sequence is that of Large ribosomal subunit protein bL21 from Magnetococcus marinus (strain ATCC BAA-1437 / JCM 17883 / MC-1).